We begin with the raw amino-acid sequence, 342 residues long: P2Y purinoceptor 12 (342 aa).

Over 1–27 the chain is Extracellular; sequence MQAIDNLTSAPGNTSLCTRDYKITQVL. 2 N-linked (GlcNAc...) asparagine glycosylation sites follow: N6 and N13. 2 disulfide bridges follow: C17–C270 and C97–C175. Residues 28-50 form a helical membrane-spanning segment; the sequence is FPLLYTVLFFVGLITNSLAMRIF. The Cytoplasmic segment spans residues 51–61; the sequence is FQIRSKSNFII. 2 positions are modified to phosphoserine: S55 and S57. The chain crosses the membrane as a helical span at residues 62–82; it reads FLKNTVISDLLMILTFPFKIL. Over 83 to 97 the chain is Extracellular; sequence SDAKLGAGPLRTFVC. Residues R93, C97, and Y105 each contribute to the ADP site. The chain crosses the membrane as a helical span at residues 98–118; that stretch reads QVTSVIFYFTMYISISFLGLI. Topologically, residues 119 to 142 are cytoplasmic; that stretch reads TIDRYQKTTRPFKTSNPKNLLGAK. Residues 143–162 traverse the membrane as a helical segment; it reads ILSVLIWAFMFLLSLPNMIL. Residues 156 to 159, 175 to 179, H187, and N191 contribute to the ADP site; these read SLPN and CSFLK. Residues 163–185 lie on the Extracellular side of the membrane; the sequence is TNRRPRDKNVKKCSFLKSEFGLV. A helical membrane pass occupies residues 186–207; it reads WHEIVNYICQVIFWINFLIVIV. The Cytoplasmic portion of the chain corresponds to 208–233; sequence CYTLITKELYRSYVRTRGVGKVPRKK. The chain crosses the membrane as a helical span at residues 234–259; the sequence is VNVKVFIIIAVFFICFVPFHFARIPY. ADP-binding positions include 256-259, Q263, and K280; that span reads RIPY. The Extracellular portion of the chain corresponds to 260-278; it reads TLSQTRDVFDCAAENTLFY. Residues 279–298 form a helical membrane-spanning segment; it reads VKESTLWLTSLNACLDPFIY. Residues 299–342 are Cytoplasmic-facing; that stretch reads FFLCKSFRNSLISMLKCPNSATSQSQDNRKKEQDGGDPNEETPM. The disordered stretch occupies residues 317–342; sequence NSATSQSQDNRKKEQDGGDPNEETPM. Positions 333 to 342 are enriched in acidic residues; sequence GGDPNEETPM.

It belongs to the G-protein coupled receptor 1 family.

It is found in the cell membrane. Receptor for ADP and ATP coupled to G-proteins that inhibit the adenylyl cyclase second messenger system. Required for normal platelet aggregation and blood coagulation. This is P2Y purinoceptor 12 (P2RY12) from Macaca fascicularis (Crab-eating macaque).